A 237-amino-acid polypeptide reads, in one-letter code: Synapse differentiation-inducing gene protein 1-like (237 aa).

3 disordered regions span residues 1 to 23 (MESL…HRPY), 84 to 111 (AGSC…PGQA), and 127 to 148 (ELQG…ESEC). The Extracellular segment spans residues 1 to 161 (MESLSELQNP…FLTLPPRDHL (161 aa)). Residues 129–148 (QGQEDSQEEESDGTSSESEC) show a composition bias toward acidic residues. A helical membrane pass occupies residues 162-182 (GLTLFSMLCCFWPLGIAAFYF). Residues 183–204 (SQGTSKAISKGDFRLASTTSRR) are Cytoplasmic-facing. The helical transmembrane segment at 205–225 (ALFLATLSIAVGAGLYVAVVV) threads the bilayer. At 226–237 (ALAAYMSQNGHG) the chain is on the extracellular side.

Belongs to the CD225/Dispanin family. In terms of tissue distribution, expression is restricted to the caudate-putamen. Down-regulated in R6/2 transgenic mice, a model for Huntington disease.

The protein localises to the membrane. Its subcellular location is the golgi apparatus. It is found in the cis-Golgi network. In Mus musculus (Mouse), this protein is Synapse differentiation-inducing gene protein 1-like (Syndig1l).